Here is a 258-residue protein sequence, read N- to C-terminus: Acetylglutamate kinase (258 aa).

Substrate-binding positions include 44–45 (GG), arginine 66, and asparagine 158. Residues 181–186 (DVSGIL) and 209–211 (IIT) contribute to the ATP site.

Belongs to the acetylglutamate kinase family. ArgB subfamily. In terms of assembly, homodimer.

It localises to the cytoplasm. It catalyses the reaction N-acetyl-L-glutamate + ATP = N-acetyl-L-glutamyl 5-phosphate + ADP. The protein operates within amino-acid biosynthesis; L-arginine biosynthesis; N(2)-acetyl-L-ornithine from L-glutamate: step 2/4. Its function is as follows. Catalyzes the ATP-dependent phosphorylation of N-acetyl-L-glutamate. This Escherichia coli O6:K15:H31 (strain 536 / UPEC) protein is Acetylglutamate kinase.